We begin with the raw amino-acid sequence, 277 residues long: Inositol monophosphatase 1 (277 aa).

Positions 70, 90, 92, and 93 each coordinate Mg(2+). Glu-70 contacts substrate. Position 92–95 (92–95) interacts with substrate; it reads IDGT. Phosphothreonine is present on Thr-168. Substrate contacts are provided by residues 194-196, Glu-213, and Asp-220; that span reads GTA. Residue Asp-220 participates in Mg(2+) binding.

This sequence belongs to the inositol monophosphatase superfamily. As to quaternary structure, homodimer. Mg(2+) is required as a cofactor. Post-translationally, the N-terminus is blocked.

Its subcellular location is the cytoplasm. The enzyme catalyses a myo-inositol phosphate + H2O = myo-inositol + phosphate. It catalyses the reaction 1D-myo-inositol 1-phosphate + H2O = myo-inositol + phosphate. It carries out the reaction 1D-myo-inositol 2-phosphate + H2O = myo-inositol + phosphate. The catalysed reaction is 1D-myo-inositol 3-phosphate + H2O = myo-inositol + phosphate. The enzyme catalyses 1D-myo-inositol 4-phosphate + H2O = myo-inositol + phosphate. It catalyses the reaction 1D-myo-inositol 5-phosphate + H2O = myo-inositol + phosphate. It carries out the reaction 1D-myo-inositol 6-phosphate + H2O = myo-inositol + phosphate. The catalysed reaction is scyllo-inositol 1-phosphate + H2O = scyllo-inositol + phosphate. The enzyme catalyses alpha-D-galactose 1-phosphate + H2O = D-galactose + phosphate. It catalyses the reaction alpha-D-glucose 1-phosphate + H2O = D-glucose + phosphate. It carries out the reaction D-glucose 6-phosphate + H2O = D-glucose + phosphate. The catalysed reaction is beta-D-fructose 1-phosphate + H2O = D-fructose + phosphate. The enzyme catalyses glycerol 2-phosphate + H2O = glycerol + phosphate. It catalyses the reaction adenosine 2'-phosphate + H2O = adenosine + phosphate. It functions in the pathway polyol metabolism; myo-inositol biosynthesis; myo-inositol from D-glucose 6-phosphate: step 2/2. Activity with myo-inositol monophosphate and D-galactose 1-phosphate is inhibited by Li(+), Ca(2+) and Mn(2+), but also by Mg(2+) at concentrations above 3 mM. In terms of biological role, phosphatase involved in the dephosphorylation of myo-inositol monophosphate to generate myo-inositol. Is also able to dephosphorylate scyllo-inositol-phosphate, myo-inositol 1,4-diphosphate, scyllo-inositol-1,3-diphosphate and scyllo-inositol-1,4-diphosphate. Also dephosphorylates in vitro other sugar-phosphates including D-galactose-1-phosphate, glucose-1-phosphate, glucose-6-phosphate, fructose-1-phosphate, beta-glycerophosphate and 2'-AMP. Responsible for the provision of inositol required for synthesis of phosphatidylinositol and polyphosphoinositides, and involved in maintaining normal brain function. Has been implicated as the pharmacological target for lithium Li(+) action in brain. Is equally active with myo-inositol monophosphate and D-galactose 1-phosphate. The polypeptide is Inositol monophosphatase 1 (IMPA1) (Bos taurus (Bovine)).